Here is a 374-residue protein sequence, read N- to C-terminus: Queuine tRNA-ribosyltransferase (374 aa).

Catalysis depends on Asp-89, which acts as the Proton acceptor. Residues 89-93 (DSGGF), Asp-143, Gln-187, and Gly-214 contribute to the substrate site. Residues 245 to 251 (GVGKPED) are RNA binding. The Nucleophile role is filled by Asp-264. An RNA binding; important for wobble base 34 recognition region spans residues 269–273 (TRNAR). The Zn(2+) site is built by Cys-302, Cys-304, Cys-307, and His-333.

Belongs to the queuine tRNA-ribosyltransferase family. As to quaternary structure, homodimer. Within each dimer, one monomer is responsible for RNA recognition and catalysis, while the other monomer binds to the replacement base PreQ1. It depends on Zn(2+) as a cofactor.

The enzyme catalyses 7-aminomethyl-7-carbaguanine + guanosine(34) in tRNA = 7-aminomethyl-7-carbaguanosine(34) in tRNA + guanine. It participates in tRNA modification; tRNA-queuosine biosynthesis. Its function is as follows. Catalyzes the base-exchange of a guanine (G) residue with the queuine precursor 7-aminomethyl-7-deazaguanine (PreQ1) at position 34 (anticodon wobble position) in tRNAs with GU(N) anticodons (tRNA-Asp, -Asn, -His and -Tyr). Catalysis occurs through a double-displacement mechanism. The nucleophile active site attacks the C1' of nucleotide 34 to detach the guanine base from the RNA, forming a covalent enzyme-RNA intermediate. The proton acceptor active site deprotonates the incoming PreQ1, allowing a nucleophilic attack on the C1' of the ribose to form the product. After dissociation, two additional enzymatic reactions on the tRNA convert PreQ1 to queuine (Q), resulting in the hypermodified nucleoside queuosine (7-(((4,5-cis-dihydroxy-2-cyclopenten-1-yl)amino)methyl)-7-deazaguanosine). The sequence is that of Queuine tRNA-ribosyltransferase from Psychromonas ingrahamii (strain DSM 17664 / CCUG 51855 / 37).